A 576-amino-acid chain; its full sequence is MSTLQLKETKVPSVQFVGDDDVLSHILDREGGTKLKKEKAQLLVNPQKVIKKADCELEKSDLEVLEDQNYVKVLGRNIQESLGNGSAKDGRNKVYSFQQRKHPEEMTKLALELAKTSGKKDPLDSNDPEITKNIAQKSKGHSTSEKAPLVNNNKTEFLSTQPHNLRKRIIASRSHYDSESEYSASSSEDDEEATKDEEEDTNVARLSQKSQGQNRLLPAPVSKETLPKKKKRDKASDLVEEYFEAHSSSKVLTSDRTLQRLRRARVDQKTLHNLLRKFVPSFSAEIERLNQQHEKLFHKWMLQLHLGFNIVLYGLGSKRDLLEKFRTTMLQDSIHVVINGYFPGVSVKSILNSITEDVLSHVGTFQSVLDQRDWIINRFKEDSSLELFLLIHNLDSQMLRGDNSQQILGQLSSLHNVYLIASIDHLNAPLMWDHAKQSLYNWLWYETTTYSPYTEETSYENSLLVKQSGSLPLSSLIHVLRSLTPNARGIFRLLMKFQLDNQDSPSYIGLSFQDFYQQCREAFLVNSDLTLRAQLTEFRDHKLIRTKKGTDGVEYLLIPVDSGILADFLEKEEEEA.

The stretch at 1–100 (MSTLQLKETK…RNKVYSFQQR (100 aa)) is one Involved in LRWD1-binding repeat. The segment at 112-233 (ELAKTSGKKD…ETLPKKKKRD (122 aa)) is disordered. Residue threonine 116 is modified to Phosphothreonine. Polar residues predominate over residues 150–163 (VNNNKTEFLSTQPH). Over residues 187–201 (SEDDEEATKDEEEDT) the composition is skewed to acidic residues. Over residues 204–214 (ARLSQKSQGQN) the composition is skewed to polar residues. Threonine 225 carries the post-translational modification Phosphothreonine. Serine 247 bears the Phosphoserine mark.

This sequence belongs to the ORC2 family. In terms of assembly, component of ORC, a complex composed of at least 6 subunits: ORC1, ORC2, ORC3, ORC4, ORC5 and ORC6. ORC is regulated in a cell-cycle dependent manner. It is sequentially assembled at the exit from anaphase of mitosis and disassembled as cells enter S phase. Interacts with DBF4. Interacts with MCM10. Interacts with LRWD1 throughout the cell cycle; this interaction, which occurs only with non-ubiquitinated form of LRWD1, prevents LRWD1 ubiquitination and hence stabilizes the protein. Interacts with POLQ.

The protein localises to the nucleus. Component of the origin recognition complex (ORC) that binds origins of replication. DNA-binding is ATP-dependent. The specific DNA sequences that define origins of replication have not been identified yet. ORC is required to assemble the pre-replication complex necessary to initiate DNA replication. Binds histone H3 and H4 trimethylation marks H3K9me3, H3K20me3 and H4K27me3. Stabilizes LRWD1, by protecting it from ubiquitin-mediated proteasomal degradation. Also stabilizes ORC3. This is Origin recognition complex subunit 2 (Orc2) from Mus musculus (Mouse).